The following is a 119-amino-acid chain: Polyhedrin (119 aa).

Belongs to the polyhedrin family.

Major component of the virus occlusion bodies, which are large proteinaceous structures (polyhedra), that protect the virus from the outside environment for extended periods until they are ingested by insect larvae. The polypeptide is Polyhedrin (PH) (Antheraea pernyi nuclear polyhedrosis virus (ApNPV)).